Reading from the N-terminus, the 494-residue chain is NAD(P)H-quinone oxidoreductase subunit 2 B, chloroplastic (494 aa).

A run of 13 helical transmembrane segments spans residues 6–26, 39–59, 81–101, 106–126, 131–151, 166–186, 211–231, 277–297, 305–325, 336–356, 377–397, 413–433, and 468–488; these read LLLF…GLIL, TPWF…VLLF, IFRF…VEYI, MAIT…MVLC, LVTI…LSGY, LLMG…LYGL, ILIA…LVPF, WHLL…LIAI, MLAY…IAGD, YMLF…LFGL, AFSL…AGFF, LLVS…LKII, and MIVC…IIAI.

The protein belongs to the complex I subunit 2 family. As to quaternary structure, NDH is composed of at least 16 different subunits, 5 of which are encoded in the nucleus.

It localises to the plastid. The protein resides in the chloroplast thylakoid membrane. It carries out the reaction a plastoquinone + NADH + (n+1) H(+)(in) = a plastoquinol + NAD(+) + n H(+)(out). The catalysed reaction is a plastoquinone + NADPH + (n+1) H(+)(in) = a plastoquinol + NADP(+) + n H(+)(out). In terms of biological role, NDH shuttles electrons from NAD(P)H:plastoquinone, via FMN and iron-sulfur (Fe-S) centers, to quinones in the photosynthetic chain and possibly in a chloroplast respiratory chain. The immediate electron acceptor for the enzyme in this species is believed to be plastoquinone. Couples the redox reaction to proton translocation, and thus conserves the redox energy in a proton gradient. In Cycas taitungensis (Prince sago), this protein is NAD(P)H-quinone oxidoreductase subunit 2 B, chloroplastic.